Here is a 490-residue protein sequence, read N- to C-terminus: Kinetochore protein Nuf2 homolog (490 aa).

Coiled coils occupy residues 146-280 (DRKF…KLEA) and 310-407 (DLID…SETI). 2 disordered regions span residues 346-365 (QSETHEQLRIEHTQKSEERQ) and 468-490 (IDAGENTENCDPQPNDSSFSVFK).

This sequence belongs to the NUF2 family. In terms of assembly, component of the NDC80 complex, which is composed of at least ndc-80 and him-10. The NDC80 complex interacts with knl-1.

It is found in the nucleus. The protein localises to the chromosome. It localises to the centromere. The protein resides in the kinetochore. Functionally, acts as a component of the essential kinetochore-associated NDC80 complex, which is required for chromosome segregation in mitosis and meiosis and spindle checkpoint activity. The ndc-80 complex synergistically enhances the affinity of the ska-1 complex for microtubules and may allow the ndc-80 complex to track depolymerizing microtubules. In Caenorhabditis elegans, this protein is Kinetochore protein Nuf2 homolog (him-10).